A 122-amino-acid polypeptide reads, in one-letter code: Ribosome-binding factor A (122 aa).

The protein belongs to the RbfA family. Monomer. Binds 30S ribosomal subunits, but not 50S ribosomal subunits or 70S ribosomes.

The protein resides in the cytoplasm. Its function is as follows. One of several proteins that assist in the late maturation steps of the functional core of the 30S ribosomal subunit. Associates with free 30S ribosomal subunits (but not with 30S subunits that are part of 70S ribosomes or polysomes). Required for efficient processing of 16S rRNA. May interact with the 5'-terminal helix region of 16S rRNA. The sequence is that of Ribosome-binding factor A from Streptococcus agalactiae serotype III (strain NEM316).